The following is a 484-amino-acid chain: Cobyric acid synthase (484 aa).

Residues 246–437 enclose the GATase cobBQ-type domain; the sequence is ALRVVVPALP…VHGLFDTPAA (192 aa). Cys327 serves as the catalytic Nucleophile. His429 is an active-site residue.

Belongs to the CobB/CobQ family. CobQ subfamily.

The protein operates within cofactor biosynthesis; adenosylcobalamin biosynthesis. Its function is as follows. Catalyzes amidations at positions B, D, E, and G on adenosylcobyrinic A,C-diamide. NH(2) groups are provided by glutamine, and one molecule of ATP is hydrogenolyzed for each amidation. This Paraburkholderia phymatum (strain DSM 17167 / CIP 108236 / LMG 21445 / STM815) (Burkholderia phymatum) protein is Cobyric acid synthase.